Consider the following 326-residue polypeptide: Microtubule-associated protein RP/EB family member 2 (326 aa).

S9 is modified (phosphoserine). The Calponin-homology (CH) domain maps to 56 to 158; that stretch reads TMSRHDIIAW…FIQWFKKFYD (103 aa). Residue Y166 is modified to Phosphotyrosine. Disordered regions lie at residues 170–239 and 297–326; these read EARQ…DKDL and YASD…QEEY. Residues 186–326 form a DCTN1-binding region; that stretch reads QIFNLPKKSH…DQQPQQQEEY (141 aa). A compositionally biased stretch (low complexity) spans 199 to 233; that stretch reads SPTAGAAKSSPASKPGSTPSRPSSAKRASSSGSAS. S218 and S235 each carry phosphoserine. Positions 235–305 constitute an EB1 C-terminal domain; that stretch reads SDKDLETQVI…LYASDEQEGQ (71 aa). Residues 258–301 are APC-binding; the sequence is EGVEKERDFYFGKLREIELLCQEHGQENDDLVQRLMEVLYASDE. The segment covering 300–312 has biased composition (acidic residues); it reads DEQEGQTEEPEAE. Over residues 317–326 the composition is skewed to low complexity; the sequence is DQQPQQQEEY.

Belongs to the MAPRE family. Interacts with DCTN1. Interacts with APC (via C-terminal). Interacts with monomeric and polymerized tubulin. Interacts with SLAIN1. Interacts (via the N-terminal region) with BAG1. Interacts with ASB14. Post-translationally, ubiquitinated in an ASB14-dependent manner; leading to proteasomal degradation. In terms of processing, phosphorylated at Ser-235 by CK2 leading to enhanced cell adhesion. Phosphorylated by CDK1 and AURKB during mitosis reduces the binding affinity of MAPRE2 for microtubules. As to expression, expressed during early stages of apico-basal epithelial differentiation but down-regulated in most cells at later stages.

Its subcellular location is the cytoplasm. It is found in the cytoskeleton. The protein resides in the spindle. Adapter protein that is involved in microtubule polymerization, and spindle function by stabilizing microtubules and anchoring them at centrosomes. Therefore, ensures mitotic progression and genome stability. Acts as a central regulator of microtubule reorganization in apico-basal epithelial differentiation. Plays a role during oocyte meiosis by regulating microtubule dynamics. Participates in neurite growth by interacting with plexin B3/PLXNB3 and microtubule reorganization during apico-basal epithelial differentiation. Plays also an essential role for cell migration and focal adhesion dynamics. Mechanistically, recruits HAX1 to microtubules in order to regulate focal adhesion dynamics. The protein is Microtubule-associated protein RP/EB family member 2 (Mapre2) of Mus musculus (Mouse).